Here is a 398-residue protein sequence, read N- to C-terminus: MITMIRRFIQLDAAAGVMLMMATVLALTFANWSVTAAGYQQFLMMPVEMRFGALEINKNLLLWINDGLMAIFFLLIGLEVKRELVEGSLASRQQAMLPLAAAVGGMVFPALFFLLFNANDEVTRVGWAIPAATDIAFAIGVLTLLGKRVPAGLKVFLLALAIIDDLGAILIIALFYTQQIFWPALGGAVLAVAALAYLNRQQVRKTSAYLLVGIVLWVCILKCGVHATLAGVIVGFFIPLRTSNGEPSPAVTLEHGLQTWVAFLIIPLFAFANAGIVLQGIVLEKLFSPLSLGIAAGLLVGKPLGITLLSWLTIRLGYARLPAGVGFSQIVAVSVLCGIGFTMSIFITLLAFSGGDAELITYAKLGILLASGLAALLGYLALRGVLPVLDKAVQPCKG.

11 helical membrane-spanning segments follow: residues Ala14–Val34, Leu60–Val80, Met96–Phe116, Val125–Leu145, Val155–Phe175, Gln179–Asn199, Ile214–Val234, Phe263–Leu283, Leu292–Leu312, Ile330–Leu350, and Tyr362–Leu382.

Belongs to the NhaA Na(+)/H(+) (TC 2.A.33) antiporter family.

The protein localises to the cell inner membrane. It catalyses the reaction Na(+)(in) + 2 H(+)(out) = Na(+)(out) + 2 H(+)(in). Na(+)/H(+) antiporter that extrudes sodium in exchange for external protons. This chain is Na(+)/H(+) antiporter NhaA, found in Pectobacterium carotovorum subsp. carotovorum (strain PC1).